A 184-amino-acid chain; its full sequence is Probable gluconokinase (184 aa).

Residue 11-18 coordinates ATP; that stretch reads GVSGSGKS.

Belongs to the gluconokinase GntK/GntV family.

It carries out the reaction D-gluconate + ATP = 6-phospho-D-gluconate + ADP + H(+). It functions in the pathway carbohydrate acid metabolism; D-gluconate degradation. The polypeptide is Probable gluconokinase (Idnk) (Mus musculus (Mouse)).